The chain runs to 101 residues: Small ribosomal subunit protein uS14 (101 aa).

It belongs to the universal ribosomal protein uS14 family. In terms of assembly, part of the 30S ribosomal subunit. Contacts proteins S3 and S10.

Its function is as follows. Binds 16S rRNA, required for the assembly of 30S particles and may also be responsible for determining the conformation of the 16S rRNA at the A site. This chain is Small ribosomal subunit protein uS14, found in Ruthia magnifica subsp. Calyptogena magnifica.